A 451-amino-acid chain; its full sequence is MDQTPSYSPPSGTAVILAAGLGTRMKSTRPKVLHPIAGRSMLRHLIAACQPVFSHIVVVIGPDMDSVAREAAPHPTVVQQERLGTAHAALQAMALVQQGEVAILYGDNPLISTATLHTLVQRRRQGDAVLAMLAMRPPEPGRYGRVITEKYQTGDYVSRIVEYAEANEQERAVTLCNAGVFCADAASMAAWLGGVENANSKGEYYLGDIIPLAIAGGGHVAAVEAPYEELRGINSKVELAEAEATVQIVLRRKALENGVTMTAPETVFLSADTLLAPDVLVGPHVVFGPGVTVEEGAEIRAFSHLEGCHVGRHTLIGPYARLRPGSVLGAGAHVGNFVELKQATLGEGAKANHLTYLGDVEVGARANIGAGTITCNYDGVHKHRTEIGDDAFIGSDTALVAPVRIGRGAITGAGSVIVDDVPADALALARGRQVNKPERAAEIRRQLKGSV.

Residues 1 to 236 (MDQTPSYSPP…YEELRGINSK (236 aa)) form a pyrophosphorylase region. Residues 17-20 (LAAG), K31, Q79, 84-85 (GT), 105-107 (YGD), G144, E162, N177, and N234 contribute to the UDP-N-acetyl-alpha-D-glucosamine site. D107 contacts Mg(2+). Residue N234 participates in Mg(2+) binding. The tract at residues 237–257 (VELAEAEATVQIVLRRKALEN) is linker. Residues 258 to 451 (GVTMTAPETV…EIRRQLKGSV (194 aa)) form an N-acetyltransferase region. UDP-N-acetyl-alpha-D-glucosamine-binding residues include R323 and K341. Residue H353 is the Proton acceptor of the active site. Residues Y356 and N367 each coordinate UDP-N-acetyl-alpha-D-glucosamine. Residues A370, 376-377 (NY), S395, A413, and R430 contribute to the acetyl-CoA site.

The protein in the N-terminal section; belongs to the N-acetylglucosamine-1-phosphate uridyltransferase family. It in the C-terminal section; belongs to the transferase hexapeptide repeat family. In terms of assembly, homotrimer. Mg(2+) is required as a cofactor.

It localises to the cytoplasm. It catalyses the reaction alpha-D-glucosamine 1-phosphate + acetyl-CoA = N-acetyl-alpha-D-glucosamine 1-phosphate + CoA + H(+). It carries out the reaction N-acetyl-alpha-D-glucosamine 1-phosphate + UTP + H(+) = UDP-N-acetyl-alpha-D-glucosamine + diphosphate. Its pathway is nucleotide-sugar biosynthesis; UDP-N-acetyl-alpha-D-glucosamine biosynthesis; N-acetyl-alpha-D-glucosamine 1-phosphate from alpha-D-glucosamine 6-phosphate (route II): step 2/2. It functions in the pathway nucleotide-sugar biosynthesis; UDP-N-acetyl-alpha-D-glucosamine biosynthesis; UDP-N-acetyl-alpha-D-glucosamine from N-acetyl-alpha-D-glucosamine 1-phosphate: step 1/1. It participates in bacterial outer membrane biogenesis; LPS lipid A biosynthesis. Its function is as follows. Catalyzes the last two sequential reactions in the de novo biosynthetic pathway for UDP-N-acetylglucosamine (UDP-GlcNAc). The C-terminal domain catalyzes the transfer of acetyl group from acetyl coenzyme A to glucosamine-1-phosphate (GlcN-1-P) to produce N-acetylglucosamine-1-phosphate (GlcNAc-1-P), which is converted into UDP-GlcNAc by the transfer of uridine 5-monophosphate (from uridine 5-triphosphate), a reaction catalyzed by the N-terminal domain. The chain is Bifunctional protein GlmU from Granulibacter bethesdensis (strain ATCC BAA-1260 / CGDNIH1).